The sequence spans 346 residues: Small glutamine-rich tetratricopeptide repeat-containing protein 2 (346 aa).

TPR repeat units lie at residues 102 to 135 (AEDL…LPTN), 136 to 169 (AIYY…DPSY), 170 to 203 (FRGY…EGDN), and 205 to 229 (TEAM…EKTV). Positions 219-249 (VEQSLNLEKTVPEQSRDADVDASQGASAGGL) are disordered. Residues 228 to 237 (TVPEQSRDAD) show a composition bias toward basic and acidic residues. Position 308 is a phosphothreonine (Thr-308). The interval 325–346 (GNLFGGAGAQSTDETPDNENKQ) is disordered.

This sequence belongs to the SGT family. As to quaternary structure, interacts with HSC82, HSP104, MDY2, SSA1 and SSA2.

Its subcellular location is the cytoplasm. Functionally, co-chaperone that binds to the molecular chaperone Hsp70 (SSA1 and SSA2). Regulates Hsp70 ATPase activity. Required for recovery from heat shock. This Saccharomyces cerevisiae (strain ATCC 204508 / S288c) (Baker's yeast) protein is Small glutamine-rich tetratricopeptide repeat-containing protein 2 (SGT2).